The chain runs to 275 residues: Large ribosomal subunit protein uL2 (275 aa).

Residues 224 to 275 (AMNPVDHPHGGGEGKAPIGHPGPLTPWGKPALGYKTRKKGKASDKFIVKRRK) are disordered. Residues 264–275 (KASDKFIVKRRK) are compositionally biased toward basic and acidic residues.

The protein belongs to the universal ribosomal protein uL2 family. In terms of assembly, part of the 50S ribosomal subunit. Forms a bridge to the 30S subunit in the 70S ribosome.

One of the primary rRNA binding proteins. Required for association of the 30S and 50S subunits to form the 70S ribosome, for tRNA binding and peptide bond formation. It has been suggested to have peptidyltransferase activity; this is somewhat controversial. Makes several contacts with the 16S rRNA in the 70S ribosome. This chain is Large ribosomal subunit protein uL2, found in Caldanaerobacter subterraneus subsp. tengcongensis (strain DSM 15242 / JCM 11007 / NBRC 100824 / MB4) (Thermoanaerobacter tengcongensis).